Reading from the N-terminus, the 181-residue chain is uncharacterized protein (181 aa).

A helical transmembrane segment spans residues 133 to 153 (MCVCVHVCACVYVCMCVLVCM).

The protein resides in the membrane. This is an uncharacterized protein from Homo sapiens (Human).